Here is a 119-residue protein sequence, read N- to C-terminus: MVKLAFPRELRLLTPSQFTFVFQQPQRAGTPQITILGRLNSLGHPRIGLTVAKKNVRRAHERNRIKRLTRESFRLRQHELPAMDFVVVAKKGVADLDNRALSEALEKLWRRHCRLARGS.

This sequence belongs to the RnpA family. As to quaternary structure, consists of a catalytic RNA component (M1 or rnpB) and a protein subunit.

The enzyme catalyses Endonucleolytic cleavage of RNA, removing 5'-extranucleotides from tRNA precursor.. Functionally, RNaseP catalyzes the removal of the 5'-leader sequence from pre-tRNA to produce the mature 5'-terminus. It can also cleave other RNA substrates such as 4.5S RNA. The protein component plays an auxiliary but essential role in vivo by binding to the 5'-leader sequence and broadening the substrate specificity of the ribozyme. This is Ribonuclease P protein component from Escherichia fergusonii (strain ATCC 35469 / DSM 13698 / CCUG 18766 / IAM 14443 / JCM 21226 / LMG 7866 / NBRC 102419 / NCTC 12128 / CDC 0568-73).